A 702-amino-acid chain; its full sequence is Putative GMC-type oxidoreductase R135 (702 aa).

The chain crosses the membrane as a helical span at residues 55 to 75 (LTGDIVIIGAGAAGSLLAHYL). An FAD-binding site is contributed by 58-88 (DIVIIGAGAAGSLLAHYLARFSNMKIILLEA). Histidine 628 is an active-site residue.

This sequence belongs to the GMC oxidoreductase family. It depends on FAD as a cofactor.

The protein localises to the virion. Its subcellular location is the host membrane. This chain is Putative GMC-type oxidoreductase R135, found in Acanthamoeba polyphaga (Amoeba).